We begin with the raw amino-acid sequence, 199 residues long: Probable thymidylate kinase (199 aa).

7–14 (GLDGSGKT) contributes to the ATP binding site.

This sequence belongs to the thymidylate kinase family.

The enzyme catalyses dTMP + ATP = dTDP + ADP. This chain is Probable thymidylate kinase, found in Halobacterium salinarum (strain ATCC 29341 / DSM 671 / R1).